The sequence spans 977 residues: AP-2 complex subunit alpha-1 (977 aa).

Positions 614–702 (AKLKRKKGPG…PSLGPTPEEA (89 aa)) are disordered. 2 positions are modified to phosphoserine: S626 and S652. The segment covering 646-657 (PTPSTVSTPSPS) has biased composition (low complexity). T653 bears the Phosphothreonine mark. S655 carries the post-translational modification Phosphoserine. The span at 666–675 (APPPAAPPAP) shows a compositional bias: pro residues.

It belongs to the adaptor complexes large subunit family. As to quaternary structure, adaptor protein complex 2 (AP-2) is a heterotetramer composed of two large adaptins (alpha-type subunit AP2A1 or AP2A2 and beta-type subunit AP2B1), a medium adaptin (mu-type subunit AP2M1) and a small adaptin (sigma-type subunit AP2S1). Interacts with HIP1 and RAB11FIP2. Interacts with SLC12A5. Interacts with clathrin. Interacts with SGIP1. Interacts with RFTN1. Interacts with KIAA1107. Interacts with PICALM. Together with AP2B1 and AP2M1, it interacts with ADAM10; this interaction facilitates ADAM10 endocytosis from the plasma membrane during long-term potentiation in hippocampal neurons. Interacts with ABCB11; this interaction regulates cell membrane expression of ABCB11 through its internalization in a clathrin-dependent manner and its subsequent degradation. Probably interacts with ACE2 (via endocytic sorting signal motif); the interaction is inhibited by ACE2 phosphorylation. As to expression, expressed in the brain (at protein level). Isoform A: Expressed only in neuronal tissue and skeletal muscle. Isoform B: Widely expressed.

The protein localises to the cell membrane. It localises to the membrane. It is found in the coated pit. Component of the adaptor protein complex 2 (AP-2). Adaptor protein complexes function in protein transport via transport vesicles in different membrane traffic pathways. Adaptor protein complexes are vesicle coat components and appear to be involved in cargo selection and vesicle formation. AP-2 is involved in clathrin-dependent endocytosis in which cargo proteins are incorporated into vesicles surrounded by clathrin (clathrin-coated vesicles, CCVs) which are destined for fusion with the early endosome. The clathrin lattice serves as a mechanical scaffold but is itself unable to bind directly to membrane components. Clathrin-associated adaptor protein (AP) complexes which can bind directly to both the clathrin lattice and to the lipid and protein components of membranes are considered to be the major clathrin adaptors contributing the CCV formation. AP-2 also serves as a cargo receptor to selectively sort the membrane proteins involved in receptor-mediated endocytosis. AP-2 seems to play a role in the recycling of synaptic vesicle membranes from the presynaptic surface. AP-2 recognizes Y-X-X-[FILMV] (Y-X-X-Phi) and [ED]-X-X-X-L-[LI] endocytosis signal motifs within the cytosolic tails of transmembrane cargo molecules. AP-2 may also play a role in maintaining normal post-endocytic trafficking through the ARF6-regulated, non-clathrin pathway. The AP-2 alpha subunit binds polyphosphoinositide-containing lipids, positioning AP-2 on the membrane. During long-term potentiation in hippocampal neurons, AP-2 is responsible for the endocytosis of ADAM10. The AP-2 alpha subunit acts via its C-terminal appendage domain as a scaffolding platform for endocytic accessory proteins. The AP-2 alpha and AP-2 sigma subunits are thought to contribute to the recognition of the [ED]-X-X-X-L-[LI] motif. The protein is AP-2 complex subunit alpha-1 (Ap2a1) of Mus musculus (Mouse).